Reading from the N-terminus, the 272-residue chain is Streptomycin 3''-kinase (272 aa).

The active-site Proton acceptor is the Asp-190.

The protein belongs to the aminoglycoside phosphotransferase family.

The catalysed reaction is streptomycin + ATP = streptomycin 3''-phosphate + ADP + H(+). In terms of biological role, the aminoglycoside phosphotransferases achieve inactivation of their antibiotic substrates by phosphorylation. This Streptomyces griseus protein is Streptomycin 3''-kinase (aphE).